A 302-amino-acid chain; its full sequence is ATP synthase mitochondrial F1 complex assembly factor 1 (302 aa).

It belongs to the ATP11 family. As to quaternary structure, interacts with ATP5F1B; involved in the assembly of the F1 component of the mitochondrial ATP synthase (ATPase).

It localises to the mitochondrion inner membrane. In terms of biological role, has a complex stabilizing activity in the assembly of the mitochondrial F1-F0 complex. The sequence is that of ATP synthase mitochondrial F1 complex assembly factor 1 (atpaf1) from Danio rerio (Zebrafish).